A 231-amino-acid chain; its full sequence is 7-cyano-7-deazaguanine synthase (231 aa).

8-18 (FSGGQDSTTCL) serves as a coordination point for ATP. Residues C188, C197, C200, and C203 each coordinate Zn(2+).

It belongs to the QueC family. The cofactor is Zn(2+).

It carries out the reaction 7-carboxy-7-deazaguanine + NH4(+) + ATP = 7-cyano-7-deazaguanine + ADP + phosphate + H2O + H(+). It participates in purine metabolism; 7-cyano-7-deazaguanine biosynthesis. Its function is as follows. Catalyzes the ATP-dependent conversion of 7-carboxy-7-deazaguanine (CDG) to 7-cyano-7-deazaguanine (preQ(0)). In Erwinia tasmaniensis (strain DSM 17950 / CFBP 7177 / CIP 109463 / NCPPB 4357 / Et1/99), this protein is 7-cyano-7-deazaguanine synthase.